Here is a 303-residue protein sequence, read N- to C-terminus: HTH-type transcriptional regulator LysG (303 aa).

In terms of domain architecture, HTH lysR-type spans 6-62 (LDGPQLAALAAVVELGSFDAAAERLHVTPSAVSQRIKSLEQQVGQVLVVREKPCRAT). A DNA-binding region (H-T-H motif) is located at residues 23–42 (FDAAAERLHVTPSAVSQRIK).

The protein belongs to the LysR transcriptional regulatory family. In terms of assembly, homodimer.

Functionally, positively regulates the expression of the exporter LysE and represses its own expression. This Mycobacterium bovis (strain ATCC BAA-935 / AF2122/97) protein is HTH-type transcriptional regulator LysG.